A 298-amino-acid chain; its full sequence is MLSEGYLSGLTYWNDIHWNCASYNEPVAGDQGKETSSVAALSYSSVDETQVQSLYVSCKSSGKFISSVHARASQHSRSQSRTVLQANSNPVFESPTLAAVGICRDVIRETYLVPPSCKSICKNYNDLHIAGGQVMAINSVMANFPSESSFEDGPLLKSSEISLSMEDSTSTQLTELPLKPIQRYSSYWRITSIKEKSSLQMQKPISNAVLNEYLEQKVVELYKQYIMDTVFHDSSPTQILASEFIMTNVDQISLQVSKEKNLDTSKVKDIVISHLLQLVSSEISTPSLHISQYSNITP.

The pLxIS motif signature appears at 287 to 291; that stretch reads SLHIS. Ser291 is subject to Phosphoserine.

As to quaternary structure, interacts (via pLxIS motif) with IRF5; leading to IRF5 activation. Interacts with SLC15A4; leading to its recruitment to endolysosome. In terms of processing, the phosphorylated pLxIS motif constitutes an IRF5-binding motif, leading to recruitment of the transcription factor IRF5 to induce type-I interferons and other cytokines.

The protein localises to the lysosome membrane. It is found in the endosome membrane. Its subcellular location is the nucleus. It localises to the cytoplasm. Its function is as follows. Innate immune adapter that mediates the recruitment and activation of IRF5 downstream of endolysosomal toll-like receptors TLR7, TLR8 and TLR9. Following recruitment to endolysosome by SLC15A4 downstream of TLR7, TLR8 and TLR9, specifically recruits IRF5 transcription factor via its pLxIS motif, leading to IRF5 activation and subsequent expression of type I interferons. Plays a role in the regulation of endolysosomal pH in immune cells such as B-cells, dendritic cells and monocytes. The chain is TLR adapter interacting with SLC15A4 on the lysosome from Mus musculus (Mouse).